A 206-amino-acid polypeptide reads, in one-letter code: Ras-related protein ralB-B (206 aa).

Residue 21–28 participates in GTP binding; it reads GSGGVGKS. Residues 43 to 51 carry the Effector region motif; sequence YEPTKADSY. GTP is bound by residues 68–72 and 128–131; these read DTAGQ and NKSD. Positions 180–189 are enriched in basic and acidic residues; the sequence is KMSENKDKNG. Residues 180–206 form a disordered region; that stretch reads KMSENKDKNGKKSGKSKKGFKQRCCLL. Over residues 190 to 200 the composition is skewed to basic residues; sequence KKSGKSKKGFK. Position 203 is a cysteine methyl ester (Cys203). Cys203 is lipidated: S-geranylgeranyl cysteine. A propeptide spans 204-206 (removed in mature form); it reads CLL.

This sequence belongs to the small GTPase superfamily. Ras family. Interacts with ralbp1 and rap1gds1.

It localises to the cell membrane. The protein localises to the midbody. It catalyses the reaction GTP + H2O = GDP + phosphate + H(+). Functionally, multifunctional GTPase involved in a variety of cellular processes including gene expression, cell migration, cell proliferation, oncogenic transformation and membrane trafficking. Accomplishes its multiple functions by interacting with distinct downstream effectors. Acts as a GTP sensor for GTP-dependent exocytosis of dense core vesicles. Required both to stabilize the assembly of the exocyst complex and to localize functional exocyst complexes to the leading edge of migrating cells. Required for suppression of apoptosis. In late stages of cytokinesis, upon completion of the bridge formation between dividing cells, mediates exocyst recruitment to the midbody to drive abscission. Regulates the actin cytoskeleton to play a role in gastrulation or neurulation. During the cleavage stages, the GTP-bound form induces a cortical reaction that affects the localization of pigment granules. Activated by the FGF pathway via ras and ral-GDS, but independently of raf. Directs ralbp1 to the plasma membrane. Involved in ligand-dependent receptor mediated endocytosis of the EGF and insulin receptors. This Xenopus laevis (African clawed frog) protein is Ras-related protein ralB-B (ralb-b).